The sequence spans 57 residues: uncharacterized protein (57 aa).

The interval 26-57 (VVSTRKRLKQNTNTPPHYDTSEDEDEDNYYNY) is disordered. Residues 46–57 (SEDEDEDNYYNY) show a composition bias toward acidic residues.

This is an uncharacterized protein from Autographa californica nuclear polyhedrosis virus (AcMNPV).